We begin with the raw amino-acid sequence, 213 residues long: MAESTPKLSLLETRILGTLVEKQRTVPDTYPLSVNALMAGCNQKTSRNPVIETSEAEIVHALDSLKDLGLVREVSGSRVSRFEHLFEKALGVPTQASALLTVLMLRGPQTAGELRLNCERLHRFADISSVEAFLEELAAKEDGALVVELPRLPGSRENRWMHLLSGEPMIEAGAAGRSPSTGMQDIEELRARVSSLEAEVAELRALLLERSRE.

The protein belongs to the UPF0502 family.

The sequence is that of UPF0502 protein Daro_2469 from Dechloromonas aromatica (strain RCB).